We begin with the raw amino-acid sequence, 409 residues long: Serine hydroxymethyltransferase (409 aa).

(6S)-5,6,7,8-tetrahydrofolate is bound by residues L116 and 120–122; that span reads GHL. Position 225 is an N6-(pyridoxal phosphate)lysine (K225).

The protein belongs to the SHMT family. Homodimer. The cofactor is pyridoxal 5'-phosphate.

It is found in the cytoplasm. The catalysed reaction is (6R)-5,10-methylene-5,6,7,8-tetrahydrofolate + glycine + H2O = (6S)-5,6,7,8-tetrahydrofolate + L-serine. Its pathway is one-carbon metabolism; tetrahydrofolate interconversion. The protein operates within amino-acid biosynthesis; glycine biosynthesis; glycine from L-serine: step 1/1. Functionally, catalyzes the reversible interconversion of serine and glycine with tetrahydrofolate (THF) serving as the one-carbon carrier. This reaction serves as the major source of one-carbon groups required for the biosynthesis of purines, thymidylate, methionine, and other important biomolecules. Also exhibits THF-independent aldolase activity toward beta-hydroxyamino acids, producing glycine and aldehydes, via a retro-aldol mechanism. The polypeptide is Serine hydroxymethyltransferase (Acholeplasma laidlawii (strain PG-8A)).